The sequence spans 149 residues: MITSSLTSSLQALKLSSPFAHGSTPLSSLSKPNSFPNHRMPALVPVIRAMKTMQGRVVCATSDKTVAVEVVRLAPHPKYKRRVRMKKKYQAHDPDNQFKVGDVVRLEKSRPISKTKSFVALPVIARAARKAEAGGDELLGLPLESQQPA.

A chloroplast-targeting transit peptide spans 1–49 (MITSSLTSSLQALKLSSPFAHGSTPLSSLSKPNSFPNHRMPALVPVIRA).

The protein belongs to the universal ribosomal protein uS17 family. In terms of assembly, part of the 30S ribosomal subunit.

The protein localises to the plastid. Its subcellular location is the chloroplast. One of the primary rRNA binding proteins, it binds specifically to the 5'-end of 16S ribosomal RNA. Required for optimal plastid performance in terms of photosynthesis and growth. Required for the translation of plastid mRNAs. Plays a critical role in biosynthesis of thylakoid membrane proteins encoded by chloroplast genes. This is Small ribosomal subunit protein uS17c (RPS17) from Arabidopsis thaliana (Mouse-ear cress).